We begin with the raw amino-acid sequence, 84 residues long: Putative pelota-like protein YCL001W-B (84 aa).

This sequence belongs to the eukaryotic release factor 1 family. Pelota subfamily. Highly divergent.

The chain is Putative pelota-like protein YCL001W-B from Saccharomyces cerevisiae (strain ATCC 204508 / S288c) (Baker's yeast).